The sequence spans 730 residues: MLFNSVLRQPQLGVLRNGWSSQYPLQSLLTGYQCSGNDEHTSYGETGVPVPPFGCTFSSAPNMEHVLAVANEEGFVRLYNTESQSFRKKCFKEWMAHWNAVFDLAWVPGELKLVTAAGDQTAKFWDVKAGELIGTCKGHQCSLKSVAFSKFEKAVFCTGGRDGNIMVWDTRCNKKDGFYRQVNQISGAHNTSDKQTPSKPKKKQNSKGLAPSVDFQQSVTVVLFQDENTLVSAGAVDGIIKVWDLRKNYTAYRQEPIASKSFLYPGSSTRKLGYSSLILDSTGSTLFANCTDDNIYMFNMTGLKTSPVAIFNGHQNSTFYVKSSLSPDDQFLVSGSSDEAAYIWKVSTPWQPPTVLLGHSQEVTSVCWCPSDFTKIATCSDDNTLKIWRLNRGLEEKPGGDKLSTVGWASQKKKESRPGLVTVTSSQSTPAKAPRAKCNPSNSSPSSAACAPSCAGDLPLPSNTPTFSIKTSPAKARSPINRRGSVSSVSPKPPSSFKMSIRNWVTRTPSSSPPITPPASETKIMSPRKALIPVSQKSSQAEACSESRNRVKRRLDSSCLESVKQKCVKSCNCVTELDGQVENLHLDLCCLAGNQEDLSKDSLGPTKSSKIEGAGTSISEPPSPISPYASESCGTLPLPLRPCGEGSEMVGKENSSPENKNWLLAMAAKRKAENPSPRSPSSQTPNSRRQSGKKLPSPVTITPSSMRKICTYFHRKSQEDFCGPEHSTEL.

M1 is subject to N-acetylmethionine. WD repeat units lie at residues G47–K89, A96–T135, and G138–F178. Positions W168 to R171 match the DDB1-binding motif motif. The span at A188–S198 shows a compositional bias: polar residues. A disordered region spans residues A188–A210. T196 bears the Phosphothreonine mark. The short motif at P197 to K203 is the Nuclear localization signal element. 4 WD repeats span residues D214–R253, S267–V308, G313–T354, and G358–P398. The DDB1-binding motif signature appears at W243–R246. The segment at G399–S443 is disordered. Residues S410 and S426 each carry the phosphoserine modification. At T464 the chain carries Phosphothreonine; by CDK1 and CDK2. The tract at residues P465 to K498 is disordered. A phosphoserine mark is found at S485, S490, S495, and S512. Phosphothreonine is present on T516. Position 557 is a phosphoserine (S557). Disordered regions lie at residues S599–E631 and G644–P703. 2 positions are modified to phosphoserine: S676 and S679. Residues S679 to R689 show a composition bias toward polar residues. 2 positions are modified to phosphothreonine: T684 and T702. Phosphoserine is present on S717.

Belongs to the WD repeat cdt2 family. As to quaternary structure, component of the DCX(DTL) E3 ubiquitin ligase complex (also called CRL4(CDT2)), at least composed of CUL4 (CUL4A or CUL4B), DDB1, DTL/CDT2 and RBX1. Interacts with CDKN1A. Interacts with DDB1. Interacts with FBXO11; SCF(FBXWO11) controls DTL stability but DCX(DTL) does not control FBXO11 stability. Interacts with CRY1. Ubiquitinated by the anaphase promoting complex/cyclosome (APC/C). Autoubiquitinated through 'Lys-48'-polyubiquitin chains in a PCNA-independent reaction, allowing proteasomal turnover. Polyubiquitinated by SCF(FBXO11) when not phosphorylated, leading to its degradation. A tight regulation of the polyubiquitination by SCF(FBXO11) is involved in the control of different processes such as TGF-beta signaling, cell cycle progression and exit. In terms of processing, phosphorylated at Thr-464 by CDK1/Cyclin-B and CDK2/Cyclin-A but not by CDK2/Cyclin-E, MAPK1 or PLK1. Phosphorylation at Thr-464 inhibits the interaction with FBXO11 and decreases upon cell cycle exit induced by TGF-beta or serum starvation. In terms of tissue distribution, expressed in placenta and testis, very low expression seen in skeletal muscle. Detected in all hematopoietic tissues examined, with highest expression in thymus and bone marrow. A low level detected in the spleen and lymph node, and barely detectable level in the peripheral leukocytes. RA treatment down-regulated the expression in NT2 cell.

Its subcellular location is the nucleus. The protein localises to the nucleus membrane. It is found in the cytoplasm. The protein resides in the cytoskeleton. It localises to the microtubule organizing center. Its subcellular location is the centrosome. The protein localises to the chromosome. It functions in the pathway protein modification; protein ubiquitination. Functionally, substrate-specific adapter of a DCX (DDB1-CUL4-X-box) E3 ubiquitin-protein ligase complex required for cell cycle control, DNA damage response and translesion DNA synthesis. The DCX(DTL) complex, also named CRL4(CDT2) complex, mediates the polyubiquitination and subsequent degradation of CDT1, CDKN1A/p21(CIP1), FBH1, KMT5A and SDE2. CDT1 degradation in response to DNA damage is necessary to ensure proper cell cycle regulation of DNA replication. CDKN1A/p21(CIP1) degradation during S phase or following UV irradiation is essential to control replication licensing. KMT5A degradation is also important for a proper regulation of mechanisms such as TGF-beta signaling, cell cycle progression, DNA repair and cell migration. Most substrates require their interaction with PCNA for their polyubiquitination: substrates interact with PCNA via their PIP-box, and those containing the 'K+4' motif in the PIP box, recruit the DCX(DTL) complex, leading to their degradation. In undamaged proliferating cells, the DCX(DTL) complex also promotes the 'Lys-164' monoubiquitination of PCNA, thereby being involved in PCNA-dependent translesion DNA synthesis. The DDB1-CUL4A-DTL E3 ligase complex regulates the circadian clock function by mediating the ubiquitination and degradation of CRY1. The chain is Denticleless protein homolog (DTL) from Homo sapiens (Human).